Reading from the N-terminus, the 200-residue chain is Glycerol-3-phosphate acyltransferase (200 aa).

The next 5 membrane-spanning stretches (helical) occupy residues 8-28, 57-77, 88-108, 114-134, and 159-179; these read ALALWGVIGYLLGSIPFGMVL, LAAALTLVLDGGKGVVAVLAA, IAGLMAMIGHCYPVWLRFAGG, FLGIVLALAFPVGVGCCLAWL, and FLLGFPGAVVLLILLGALIFW.

This sequence belongs to the PlsY family. As to quaternary structure, probably interacts with PlsX.

Its subcellular location is the cell inner membrane. It catalyses the reaction an acyl phosphate + sn-glycerol 3-phosphate = a 1-acyl-sn-glycero-3-phosphate + phosphate. It functions in the pathway lipid metabolism; phospholipid metabolism. Catalyzes the transfer of an acyl group from acyl-phosphate (acyl-PO(4)) to glycerol-3-phosphate (G3P) to form lysophosphatidic acid (LPA). This enzyme utilizes acyl-phosphate as fatty acyl donor, but not acyl-CoA or acyl-ACP. The protein is Glycerol-3-phosphate acyltransferase of Roseobacter denitrificans (strain ATCC 33942 / OCh 114) (Erythrobacter sp. (strain OCh 114)).